Here is a 79-residue protein sequence, read N- to C-terminus: MSLEDDVIAIIVEQLGVDPKEVNENSSFIEDLNADSLDLTELIMTLEEKFAFEISEEDAEKLRTVGDVFTYIKKRQAEQ.

The region spanning 1–76 (MSLEDDVIAI…DVFTYIKKRQ (76 aa)) is the Carrier domain. Ser-36 carries the O-(pantetheine 4'-phosphoryl)serine modification.

The protein belongs to the acyl carrier protein (ACP) family. In terms of processing, 4'-phosphopantetheine is transferred from CoA to a specific serine of apo-ACP by AcpS. This modification is essential for activity because fatty acids are bound in thioester linkage to the sulfhydryl of the prosthetic group.

It is found in the cytoplasm. The protein operates within lipid metabolism; fatty acid biosynthesis. In terms of biological role, carrier of the growing fatty acid chain in fatty acid biosynthesis. In Chlamydia pneumoniae (Chlamydophila pneumoniae), this protein is Acyl carrier protein.